Consider the following 437-residue polypeptide: ATP-dependent protease ATPase subunit HslU (437 aa).

ATP contacts are provided by residues Val-18, 60–65 (GCGKTE), Asp-250, Glu-315, and Arg-387.

This sequence belongs to the ClpX chaperone family. HslU subfamily. A double ring-shaped homohexamer of HslV is capped on each side by a ring-shaped HslU homohexamer. The assembly of the HslU/HslV complex is dependent on binding of ATP.

The protein resides in the cytoplasm. Its function is as follows. ATPase subunit of a proteasome-like degradation complex; this subunit has chaperone activity. The binding of ATP and its subsequent hydrolysis by HslU are essential for unfolding of protein substrates subsequently hydrolyzed by HslV. HslU recognizes the N-terminal part of its protein substrates and unfolds these before they are guided to HslV for hydrolysis. The chain is ATP-dependent protease ATPase subunit HslU from Methylorubrum populi (strain ATCC BAA-705 / NCIMB 13946 / BJ001) (Methylobacterium populi).